Here is a 540-residue protein sequence, read N- to C-terminus: NXPE family member 1 (540 aa).

A signal peptide spans 1–22; the sequence is MLHKYLKLICLLAAICVLCIIS. 6 N-linked (GlcNAc...) asparagine glycosylation sites follow: Asn-24, Asn-42, Asn-87, Asn-155, Asn-205, and Asn-291.

It belongs to the NXPE family. As to expression, intestine, and to a lesser extent in kidney.

The protein localises to the secreted. This is NXPE family member 1 (NXPE1) from Oryctolagus cuniculus (Rabbit).